Reading from the N-terminus, the 107-residue chain is uncharacterized protein (107 aa).

The protein resides in the mitochondrion. This is an uncharacterized protein from Arabidopsis thaliana (Mouse-ear cress).